The chain runs to 306 residues: Homoserine O-acetyltransferase (306 aa).

Cys142 serves as the catalytic Acyl-thioester intermediate. The substrate site is built by Lys163 and Ser192. His235 (proton acceptor) is an active-site residue. Glu237 is a catalytic residue. A substrate-binding site is contributed by Arg249.

The protein belongs to the MetA family.

Its subcellular location is the cytoplasm. The catalysed reaction is L-homoserine + acetyl-CoA = O-acetyl-L-homoserine + CoA. It functions in the pathway amino-acid biosynthesis; L-methionine biosynthesis via de novo pathway; O-acetyl-L-homoserine from L-homoserine: step 1/1. In terms of biological role, transfers an acetyl group from acetyl-CoA to L-homoserine, forming acetyl-L-homoserine. The polypeptide is Homoserine O-acetyltransferase (Clostridium botulinum (strain Alaska E43 / Type E3)).